The primary structure comprises 514 residues: Cilia- and flagella-associated protein 53 (514 aa).

Coiled-coil stretches lie at residues 91–148 and 203–474; these read IINI…RQDF and KLWE…REFE.

Belongs to the CFAP53 family. Microtubule inner protein component of sperm flagellar doublet microtubules. Interacts with PIERCE1 and PIERCE2; the interactions link outer dynein arms docking complex (ODA-DC) to the internal microtubule inner proteins (MIP) in cilium axoneme. Interacts with CCDC38. Interacts with CCDC42 and IFT88. Interacts with centriolar satellite proteins PIBF1/CEP90 and PCM1. Interacts with dyneins DNAIC1, DNAIC2 AND DNAH11 and with ODA-DC component ODAD4/TTC25. Expressed in skin fibroblasts (at protein level). Expressed in nasal respiratory epithelial cells (at protein level). Expressed in airway epithelial cells.

Its subcellular location is the cytoplasm. The protein resides in the cytoskeleton. It localises to the cilium axoneme. The protein localises to the flagellum axoneme. It is found in the microtubule organizing center. Its subcellular location is the centrosome. The protein resides in the centriole. It localises to the centriolar satellite. The protein localises to the spindle pole. It is found in the cell projection. Its subcellular location is the cilium. Functionally, microtubule inner protein (MIP) part of the dynein-decorated doublet microtubules (DMTs) in cilia axoneme, which is required for motile cilia beating. Regulates motility patterns of both 9+0 and 9+2 motile cilia through differential localization and recruitment of axonemal dynein components. Required for centriolar satellite integrity and non-motile cilium assembly. Required for motile cilium formation. Through its role in the beating of primary cilia, involved in the establishment of organ laterality during embryogenesis. Required for sperm flagellum biogenesis and is essential for male fertility. The polypeptide is Cilia- and flagella-associated protein 53 (Homo sapiens (Human)).